The primary structure comprises 490 residues: Coagulation factor X (490 aa).

The first 20 residues, 1 to 20, serve as a signal peptide directing secretion; sequence MANPLHLVLLGAALAGLLLS. Residues 21 to 40 constitute a propeptide that is removed on maturation; it reads GSSVFISRRAANDVLARTRR. The 45-residue stretch at 41–85 folds into the Gla domain; sequence ANSFLEELKKGNLERECMEENCSYEEALEVFEDREKTNEFWNKYV. A 4-carboxyglutamate mark is found at Glu-46, Glu-47, Glu-54, Glu-56, Glu-59, and Glu-60. A disulfide bridge links Cys-57 with Cys-62. N-linked (GlcNAc...) asparagine glycosylation occurs at Asn-61. Residues Glu-65, Glu-66, Glu-69, Glu-72, Glu-75, and Glu-79 each carry the 4-carboxyglutamate modification. Positions 86-122 constitute an EGF-like 1; calcium-binding domain; the sequence is DGDQCESNPCQNQGTCKDGLGMYTCSCVEGYEGQDCE. Intrachain disulfides connect Cys-90-Cys-101, Cys-95-Cys-110, Cys-112-Cys-121, Cys-129-Cys-140, Cys-136-Cys-149, Cys-151-Cys-164, Cys-172-Cys-340, Cys-239-Cys-244, Cys-259-Cys-275, Cys-388-Cys-402, and Cys-413-Cys-441. Asp-103 carries the post-translational modification (3R)-3-hydroxyaspartate. One can recognise an EGF-like 2 domain in the interval 125 to 165; that stretch reads TRKLCSLDNGGCDQFCKEEENSVLCSCASGYTLGDNGKSCI. Residues 183-230 form a disordered region; sequence SPATNSSEGPPEAPGPEQQDDGNLTATENPFNLLDSPEPPPEDDSSSL. Residues 184-232 constitute a propeptide, activation peptide; the sequence is PATNSSEGPPEAPGPEQQDDGNLTATENPFNLLDSPEPPPEDDSSSLVR. Residues Asn-187 and Asn-205 are each glycosylated (N-linked (GlcNAc...) asparagine). Residues 203–212 are compositionally biased toward polar residues; it reads DGNLTATENP. The Peptidase S1 domain occupies 233–465; that stretch reads IVGGQDCRDG…FLKWIEKSMR (233 aa). Catalysis depends on charge relay system residues His-274 and Asp-320. Ser-417 functions as the Charge relay system in the catalytic mechanism.

The protein belongs to the peptidase S1 family. As to quaternary structure, the two chains are formed from a single-chain precursor by the excision of two Arg residues and are held together by 1 or more disulfide bonds. Forms a heterodimer with SERPINA5. In terms of processing, the vitamin K-dependent, enzymatic carboxylation of some glutamate residues allows the modified protein to bind calcium. Post-translationally, N- and O-glycosylated. Proteolytically cleaved and activated by cathepsin CTSG. The activation peptide is cleaved by factor IXa (in the intrinsic pathway), or by factor VIIa (in the extrinsic pathway). In terms of processing, the iron and 2-oxoglutarate dependent 3-hydroxylation of aspartate and asparagine is (R) stereospecific within EGF domains.

The protein resides in the secreted. The catalysed reaction is Selective cleavage of Arg-|-Thr and then Arg-|-Ile bonds in prothrombin to form thrombin.. Inhibited by SERPINA5. Factor Xa is a vitamin K-dependent glycoprotein that converts prothrombin to thrombin in the presence of factor Va, calcium and phospholipid during blood clotting. Factor Xa activates pro-inflammatory signaling pathways in a protease-activated receptor (PAR)-dependent manner. This chain is Coagulation factor X (F10), found in Oryctolagus cuniculus (Rabbit).